The primary structure comprises 262 residues: Flap endonuclease Xni (262 aa).

Asp105 is a binding site for Mg(2+). Residues 164–251 (SQFLDLMALA…NINLKDFRAN (88 aa)) enclose the 5'-3' exonuclease domain. 5 residues coordinate K(+): Leu172, Ala173, Pro181, Ile183, and Ile186. An interaction with DNA region spans residues 185–190 (GIGPKS).

It belongs to the Xni family. Mg(2+) is required as a cofactor. Requires K(+) as cofactor.

In terms of biological role, has flap endonuclease activity. During DNA replication, flap endonucleases cleave the 5'-overhanging flap structure that is generated by displacement synthesis when DNA polymerase encounters the 5'-end of a downstream Okazaki fragment. The chain is Flap endonuclease Xni from Shewanella sp. (strain W3-18-1).